The following is a 507-amino-acid chain: Glycerol kinase (507 aa).

Residue Thr15 participates in ADP binding. ATP-binding residues include Thr15, Thr16, and Ser17. Sn-glycerol 3-phosphate is bound at residue Thr15. Arg19 provides a ligand contact to ADP. Arg85, Glu86, Tyr137, and Asp250 together coordinate sn-glycerol 3-phosphate. 5 residues coordinate glycerol: Arg85, Glu86, Tyr137, Asp250, and Gln251. Residues Thr272, Gly316, and Gly418 each contribute to the ADP site. Thr272, Gly316, and Gly418 together coordinate ATP.

This sequence belongs to the FGGY kinase family.

It catalyses the reaction glycerol + ATP = sn-glycerol 3-phosphate + ADP + H(+). It participates in polyol metabolism; glycerol degradation via glycerol kinase pathway; sn-glycerol 3-phosphate from glycerol: step 1/1. Inhibited by fructose 1,6-bisphosphate (FBP). Its function is as follows. Key enzyme in the regulation of glycerol uptake and metabolism. Catalyzes the phosphorylation of glycerol to yield sn-glycerol 3-phosphate. The protein is Glycerol kinase of Malacoplasma penetrans (strain HF-2) (Mycoplasma penetrans).